A 78-amino-acid polypeptide reads, in one-letter code: Translational regulator CsrA (78 aa).

The protein belongs to the CsrA/RsmA family. Homodimer; the beta-strands of each monomer intercalate to form a hydrophobic core, while the alpha-helices form wings that extend away from the core.

The protein localises to the cytoplasm. Functionally, a translational regulator that binds mRNA to regulate translation initiation and/or mRNA stability. Usually binds in the 5'-UTR at or near the Shine-Dalgarno sequence preventing ribosome-binding, thus repressing translation. Its main target seems to be the major flagellin gene, while its function is anatagonized by FliW. The chain is Translational regulator CsrA from Borrelia hermsii (strain HS1 / DAH).